Consider the following 74-residue polypeptide: Exodeoxyribonuclease 7 small subunit (74 aa).

It belongs to the XseB family. As to quaternary structure, heterooligomer composed of large and small subunits.

It is found in the cytoplasm. The enzyme catalyses Exonucleolytic cleavage in either 5'- to 3'- or 3'- to 5'-direction to yield nucleoside 5'-phosphates.. Bidirectionally degrades single-stranded DNA into large acid-insoluble oligonucleotides, which are then degraded further into small acid-soluble oligonucleotides. This chain is Exodeoxyribonuclease 7 small subunit, found in Clostridium botulinum (strain Eklund 17B / Type B).